The primary structure comprises 112 residues: cAMP-regulated phosphoprotein 19 (112 aa).

Positions 1–11 (MSAESPEPASA) are enriched in low complexity. The disordered stretch occupies residues 1–49 (MSAESPEPASAEEQKEMEDKVLSPEKAEEAKLKARYPHLGQKPGGSDFL). Over residues 12–32 (EEQKEMEDKVLSPEKAEEAKL) the composition is skewed to basic and acidic residues. Residues S62 and S104 each carry the phosphoserine; by GWL modification. The disordered stretch occupies residues 72-112 (MKNKQLPTAAPDKTEVTGDHIPTPQDLPQRKPSLVASKLAG). A Phosphoserine; by PKA modification is found at S104.

This sequence belongs to the endosulfine family. In terms of assembly, interacts (when phosphorylated at Ser-62) with PPP2R2D. In terms of processing, phosphorylation at Ser-62 by MASTL/GWL during mitosis is essential for interaction with PPP2R2D (PR55-delta) and subsequent inactivation of PP2A.

It localises to the cytoplasm. In terms of biological role, protein phosphatase inhibitor that specifically inhibits protein phosphatase 2A (PP2A) during mitosis. Inhibition of PP2A is enhanced when ARPP19 is phosphorylated. When phosphorylated at Ser-62 during mitosis, specifically interacts with PPP2R2D (PR55-delta) and inhibits its activity, leading to inactivation of PP2A, an essential condition to keep cyclin-B1-CDK1 activity high during M phase. The chain is cAMP-regulated phosphoprotein 19 (ARPP19) from Taeniopygia guttata (Zebra finch).